The sequence spans 259 residues: Phosphatidylglycerol--prolipoprotein diacylglyceryl transferase (259 aa).

4 helical membrane-spanning segments follow: residues 9 to 29, 55 to 75, 92 to 112, and 117 to 137; these read IIFS…VVGI, FITY…VLLY, EGGM…YLFC, and INFL…LFLG. A 1,2-diacyl-sn-glycero-3-phospho-(1'-sn-glycerol) is bound at residue arginine 138. Transmembrane regions (helical) follow at residues 172–192, 201–221, and 228–248; these read QLYE…YATF, GLNS…IEIF, and IGFI…MLLL.

The protein belongs to the Lgt family.

It is found in the cell inner membrane. It catalyses the reaction L-cysteinyl-[prolipoprotein] + a 1,2-diacyl-sn-glycero-3-phospho-(1'-sn-glycerol) = an S-1,2-diacyl-sn-glyceryl-L-cysteinyl-[prolipoprotein] + sn-glycerol 1-phosphate + H(+). It participates in protein modification; lipoprotein biosynthesis (diacylglyceryl transfer). Its function is as follows. Catalyzes the transfer of the diacylglyceryl group from phosphatidylglycerol to the sulfhydryl group of the N-terminal cysteine of a prolipoprotein, the first step in the formation of mature lipoproteins. The chain is Phosphatidylglycerol--prolipoprotein diacylglyceryl transferase from Rickettsia felis (strain ATCC VR-1525 / URRWXCal2) (Rickettsia azadi).